Consider the following 308-residue polypeptide: Glutaminase (308 aa).

7 residues coordinate substrate: Ser66, Asn117, Glu161, Asn168, Tyr192, Tyr244, and Val262.

The protein belongs to the glutaminase family. Homotetramer.

The enzyme catalyses L-glutamine + H2O = L-glutamate + NH4(+). The polypeptide is Glutaminase (Klebsiella pneumoniae subsp. pneumoniae (strain ATCC 700721 / MGH 78578)).